The sequence spans 247 residues: Protein eak-4 (247 aa).

Gly-2 carries the N-myristoyl glycine lipid modification.

Expressed in the 2 embryonic head hypodermal cells XXXL/R.

The protein resides in the cell membrane. Its function is as follows. Together with eak-6 and sdf-9, negatively regulates dauer larva formation downstream of the insulin-like receptor daf-2 and in parallel with age-1, pdk-1 and akt-1. This chain is Protein eak-4, found in Caenorhabditis elegans.